The primary structure comprises 535 residues: MAAAVAAAAAVRSRILQVSSKVNSTWYPASSFSSSSVPTVKLFIDGKFVESKSDKWIDIHNPATNEVVGRVPQSTKAEMEAAVAACKRAFPAWADTSILSRQQVLLRYQQLIKENLKEIARLITLEQGKTLADAEGDVFRGLQVVEHACSVTSLMLGETMPSITKDMDLYSYRLPLGVCAGIAPFNFPAMIPLWMFPMAMVCGNTFLMKPSERVPGATMLLAKLLQDSGAPDGTLNIIHGQHEAVNFICDHPDIKAISFVGSNQAGEYIFERGSRNGKRVQANMGAKNHGVVMPDANKENTLNQLVGAAFGAAGQRCMALSTAVLVGEAKKWLPELVERAKNLRVNAGDQPGADLGPLITPQAKERVCNLIDSGAKEGASILLDGRKIKVKGYENGNFVGPTIISNVKPSMTCYKEEIFGPVLVVLETETLDEAIKIVNDNPYGNGTAIFTTNGAIARKYAHMVDVGQVGVNVPIPVPLPMFSFTGSRSSFRGDTNFYGKQGIQFYTQLKTITSQWKEEDATLSSPAVVMPTMGR.

A mitochondrion-targeting transit peptide spans 1–32 (MAAAVAAAAAVRSRILQVSSKVNSTWYPASSF). Residues lysine 47, lysine 52, lysine 55, and lysine 76 each carry the N6-acetyllysine; alternate modification. N6-succinyllysine; alternate occurs at positions 47, 52, 55, and 76. At lysine 87 the chain carries N6-acetyllysine. N6-acetyllysine; alternate occurs at positions 117 and 129. Residues lysine 117 and lysine 129 each carry the N6-succinyllysine; alternate modification. 6 residues coordinate NAD(+): alanine 183, phenylalanine 185, lysine 209, glutamate 212, arginine 213, and serine 262. Serine 262 carries the post-translational modification Phosphoserine. Lysine 298 carries the post-translational modification N6-acetyllysine. The active-site Nucleophile is the cysteine 317. N6-acetyllysine is present on residues lysine 330 and lysine 331. Lysine 364 and lysine 376 each carry N6-acetyllysine; alternate. N6-succinyllysine; alternate is present on residues lysine 364 and lysine 376. A Phosphoserine modification is found at serine 380. N6-succinyllysine is present on lysine 391. Glutamate 417 lines the NAD(+) pocket. At lysine 500 the chain carries N6-acetyllysine. Lysine 517 is subject to N6-succinyllysine.

It belongs to the aldehyde dehydrogenase family. In terms of assembly, homotetramer. In terms of tissue distribution, expressed in the head and flagellum of epididymal sperm but not in testicular sperm (at protein level). Kidney &gt; liver &gt; heart &gt; muscle &gt; brain.

It localises to the mitochondrion. The enzyme catalyses 3-oxopropanoate + NAD(+) + CoA + H2O = hydrogencarbonate + acetyl-CoA + NADH + H(+). The catalysed reaction is 2-methyl-3-oxopropanoate + NAD(+) + CoA + H2O = propanoyl-CoA + hydrogencarbonate + NADH + H(+). It carries out the reaction (R)-2-methyl-3-oxopropanoate + NAD(+) + CoA + H2O = propanoyl-CoA + hydrogencarbonate + NADH + H(+). It catalyses the reaction (S)-2-methyl-3-oxopropanoate + NAD(+) + CoA + H2O = propanoyl-CoA + hydrogencarbonate + NADH + H(+). Its function is as follows. Malonate and methylmalonate semialdehyde dehydrogenase involved in the catabolism of valine, thymine, and compounds catabolized by way of beta-alanine, including uracil and cytidine. The polypeptide is Methylmalonate-semialdehyde/malonate-semialdehyde dehydrogenase [acylating], mitochondrial (Rattus norvegicus (Rat)).